A 338-amino-acid polypeptide reads, in one-letter code: Mitochondrial transcription factor 1 (338 aa).

Residues Leu23, Asp76, Asp100, and Asn136 each contribute to the S-adenosyl-L-methionine site.

Belongs to the class I-like SAM-binding methyltransferase superfamily. rRNA adenine N(6)-methyltransferase family.

The protein resides in the mitochondrion. In terms of biological role, mitochondrial transcription factor that confers selective promoter recognition on the core subunit of the yeast mitochondrial RNA polymerase. Interacts with DNA in a non-specific manner. The sequence is that of Mitochondrial transcription factor 1 (MTF1) from Lachancea kluyveri (Yeast).